The chain runs to 431 residues: Glutamyl-tRNA(Gln) amidotransferase subunit A (431 aa).

Residues Lys-55 and Ser-130 each act as charge relay system in the active site. Catalysis depends on Ser-154, which acts as the Acyl-ester intermediate.

This sequence belongs to the amidase family. GatA subfamily. Heterotrimer of A, B and C subunits.

It catalyses the reaction L-glutamyl-tRNA(Gln) + L-glutamine + ATP + H2O = L-glutaminyl-tRNA(Gln) + L-glutamate + ADP + phosphate + H(+). Functionally, allows the formation of correctly charged Gln-tRNA(Gln) through the transamidation of misacylated Glu-tRNA(Gln) in organisms which lack glutaminyl-tRNA synthetase. The reaction takes place in the presence of glutamine and ATP through an activated gamma-phospho-Glu-tRNA(Gln). This Methanococcus maripaludis (strain C7 / ATCC BAA-1331) protein is Glutamyl-tRNA(Gln) amidotransferase subunit A.